The sequence spans 287 residues: 4-hydroxybenzoate octaprenyltransferase (287 aa).

9 helical membrane passes run 19 to 39 (PIGT…ASSG), 43 to 63 (LQML…GCAI), 94 to 114 (VVVA…LNIF), 118 to 138 (LSVL…FLAI), 142 to 162 (VLGI…LDFI), 167 to 187 (WVLF…YAMV), 209 to 229 (VLAI…VAHL), 235 to 255 (YFLI…KLVS), and 263 to 283 (FLAF…IVLG).

Belongs to the UbiA prenyltransferase family. It depends on Mg(2+) as a cofactor.

It is found in the cell inner membrane. The catalysed reaction is all-trans-octaprenyl diphosphate + 4-hydroxybenzoate = 4-hydroxy-3-(all-trans-octaprenyl)benzoate + diphosphate. Its pathway is cofactor biosynthesis; ubiquinone biosynthesis. Functionally, catalyzes the prenylation of para-hydroxybenzoate (PHB) with an all-trans polyprenyl group. Mediates the second step in the final reaction sequence of ubiquinone-8 (UQ-8) biosynthesis, which is the condensation of the polyisoprenoid side chain with PHB, generating the first membrane-bound Q intermediate 3-octaprenyl-4-hydroxybenzoate. The sequence is that of 4-hydroxybenzoate octaprenyltransferase from Polynucleobacter asymbioticus (strain DSM 18221 / CIP 109841 / QLW-P1DMWA-1) (Polynucleobacter necessarius subsp. asymbioticus).